Here is a 283-residue protein sequence, read N- to C-terminus: Elongation factor Ts (283 aa).

The involved in Mg(2+) ion dislocation from EF-Tu stretch occupies residues T80–V83.

It belongs to the EF-Ts family.

It localises to the cytoplasm. In terms of biological role, associates with the EF-Tu.GDP complex and induces the exchange of GDP to GTP. It remains bound to the aminoacyl-tRNA.EF-Tu.GTP complex up to the GTP hydrolysis stage on the ribosome. The polypeptide is Elongation factor Ts (Actinobacillus succinogenes (strain ATCC 55618 / DSM 22257 / CCUG 43843 / 130Z)).